Consider the following 104-residue polypeptide: Histone-like protein p6 (104 aa).

A DNA-binding region spans residues 1–19 (MAKMMQREITKTTVNVAKM). The disordered stretch occupies residues 85–104 (VEKDEDQEEQTEAPEEQVAE). The segment covering 88–104 (DEDQEEQTEAPEEQVAE) has biased composition (acidic residues).

This sequence belongs to the phi29likevirus histone-like protein p6 family. As to quaternary structure, homodimer. Homomultimer. Binds to double-stranded DNA giving rise to multimeric nucleoprotein complexes. Binding specificity for the viral DNA is based on supercoiling, the viral genome having a negative superhelicity lower than that of plasmid DNA. Interacts with the DNA replication protein p17; this interaction optimizes the binding of protein p6 at the viral DNA ends, thus favoring the initiation of replication. Interacts with the late genes activator p4 (via C-terminus).

Its function is as follows. Histone-like nucleoprotein that binds to the viral dsDNA and responsible for wrapping and compacting the viral DNA about 4-fold. Forms a nucleoprotein complex in which the DNA adopts a right-handed toroidal conformation winding around a protein core. Binds ito most, if not all, the viral genome, although with different affinity, the highest one corresponding to the genome ends. The formation of the nucleoprotein complex at the genome ends, activates the initiation of viral DNA replication. The binding of p6 would recruit the complex formed by the TP and the DNA polymerase to the origin. Protein p6 also represses early transcription from promoter C2, and, together with protein p4, represses transcription from promoters A2b and A2c and activates late transcription from promoter A3. Protein p6 is therefore involved in the early to late transcription switch. The formation of the nucleoprotein complex at the right end of the phage genome where the early promoter C2 is located affects local topology, which may contribute to the promoter repression. The sequence is that of Histone-like protein p6 (6) from Bacillus subtilis (Bacteriophage phi-29).